The sequence spans 199 residues: ATP-dependent Clp protease proteolytic subunit (199 aa).

S97 serves as the catalytic Nucleophile. The active site involves H122.

The protein belongs to the peptidase S14 family. As to quaternary structure, fourteen ClpP subunits assemble into 2 heptameric rings which stack back to back to give a disk-like structure with a central cavity, resembling the structure of eukaryotic proteasomes.

The protein localises to the cytoplasm. The enzyme catalyses Hydrolysis of proteins to small peptides in the presence of ATP and magnesium. alpha-casein is the usual test substrate. In the absence of ATP, only oligopeptides shorter than five residues are hydrolyzed (such as succinyl-Leu-Tyr-|-NHMec, and Leu-Tyr-Leu-|-Tyr-Trp, in which cleavage of the -Tyr-|-Leu- and -Tyr-|-Trp bonds also occurs).. In terms of biological role, cleaves peptides in various proteins in a process that requires ATP hydrolysis. Has a chymotrypsin-like activity. Plays a major role in the degradation of misfolded proteins. The sequence is that of ATP-dependent Clp protease proteolytic subunit from Pelobacter propionicus (strain DSM 2379 / NBRC 103807 / OttBd1).